The primary structure comprises 282 residues: Phosphatidylglycerol--prolipoprotein diacylglyceryl transferase (282 aa).

The next 3 helical transmembrane spans lie at 18–38 (IQVHWYGVIIASAVVIAVALA), 56–76 (ILWALPFTLIAARTYYVIFQW), and 89–109 (IWDGGIAIYGGLIGAGIVVIL). An a 1,2-diacyl-sn-glycero-3-phospho-(1'-sn-glycerol)-binding site is contributed by Arg-137. Residues 237 to 257 (VIRVSQALSVVLFFGSIGLMI) form a helical membrane-spanning segment.

The protein belongs to the Lgt family.

It localises to the cell membrane. It carries out the reaction L-cysteinyl-[prolipoprotein] + a 1,2-diacyl-sn-glycero-3-phospho-(1'-sn-glycerol) = an S-1,2-diacyl-sn-glyceryl-L-cysteinyl-[prolipoprotein] + sn-glycerol 1-phosphate + H(+). Its pathway is protein modification; lipoprotein biosynthesis (diacylglyceryl transfer). Functionally, catalyzes the transfer of the diacylglyceryl group from phosphatidylglycerol to the sulfhydryl group of the N-terminal cysteine of a prolipoprotein, the first step in the formation of mature lipoproteins. In Lactiplantibacillus plantarum (strain ATCC BAA-793 / NCIMB 8826 / WCFS1) (Lactobacillus plantarum), this protein is Phosphatidylglycerol--prolipoprotein diacylglyceryl transferase.